We begin with the raw amino-acid sequence, 376 residues long: Chaperone protein DnaJ (376 aa).

The J domain maps to aspartate 5–glycine 70. A CR-type zinc finger spans residues glycine 132–serine 210. Cysteine 145, cysteine 148, cysteine 162, cysteine 165, cysteine 184, cysteine 187, cysteine 198, and cysteine 201 together coordinate Zn(2+). CXXCXGXG motif repeat units lie at residues cysteine 145–glycine 152, cysteine 162–glycine 169, cysteine 184–glycine 191, and cysteine 198–glycine 205.

This sequence belongs to the DnaJ family. Homodimer. Zn(2+) serves as cofactor.

The protein localises to the cytoplasm. Participates actively in the response to hyperosmotic and heat shock by preventing the aggregation of stress-denatured proteins and by disaggregating proteins, also in an autonomous, DnaK-independent fashion. Unfolded proteins bind initially to DnaJ; upon interaction with the DnaJ-bound protein, DnaK hydrolyzes its bound ATP, resulting in the formation of a stable complex. GrpE releases ADP from DnaK; ATP binding to DnaK triggers the release of the substrate protein, thus completing the reaction cycle. Several rounds of ATP-dependent interactions between DnaJ, DnaK and GrpE are required for fully efficient folding. Also involved, together with DnaK and GrpE, in the DNA replication of plasmids through activation of initiation proteins. This is Chaperone protein DnaJ from Shewanella sp. (strain W3-18-1).